The sequence spans 598 residues: Transcription factor cpaR (598 aa).

The zn(2)-C6 fungal-type DNA-binding region spans 22 to 51 (CNGCRERKRRCVRRKRELPCLSCQAENRPC).

It is found in the nucleus. In terms of biological role, transcription factor; part of the gene cluster that mediates the biosynthesis of the fungal neurotoxin cyclopiazonic acid (CPA), a nanomolar inhibitor of Ca(2+)-ATPase with a unique pentacyclic indole tetramic acid scaffold. This is Transcription factor cpaR from Aspergillus oryzae (Yellow koji mold).